We begin with the raw amino-acid sequence, 392 residues long: NDP-glycosyltransferase YjiC (392 aa).

UDP-binding positions include N18, T229, S255, V278, H293, and 297-301 (NSTME).

It belongs to the UDP-glycosyltransferase family. Monomer.

The enzyme catalyses an NDP-glycose + an acceptor = a glycosylated acceptor + NDP.. Its activity is regulated as follows. Activity is improved in the presence of Mn(2+), Mg(2+) and Ca(2+), and inhibited by Ni(2+), Zn(2+) and Cu(2+). Glycosyltransferase that can glycosylate a wide range of substrates, including various flavonoids, phenyl ketones, curcuminoid, lignins, zingerone, triterpenes, stilbene and anthraquinone, using UDP-glucose or ADP-glucose as sugar donor. It also exhibits O-, N- and S-glycosylation activities towards simple aromatics. In vivo, the broad acceptor tolerance of YjiC might function as a detoxification agent against exogenous xenobiotics to make the strain adaptable to the changeable environment. The protein is NDP-glycosyltransferase YjiC (yjiC) of Bacillus subtilis (strain 168).